Here is a 152-residue protein sequence, read N- to C-terminus: Protein eva-1 homolog A (152 aa).

The tract at residues 1–60 (MRLPLSHSPEHVEMALLSNILAAYSFVSENPERAALYFVSGVCIGLVLTLAALVIRISCH) is necessary for the localization and biological activity. A helical membrane pass occupies residues 35-55 (ALYFVSGVCIGLVLTLAALVI). A disordered region spans residues 70–97 (KFLQDRESSSDSSDSEDGSEDTVSDLSV). Residues 82-92 (SDSEDGSEDTV) show a composition bias toward acidic residues. Phosphothreonine is present on threonine 106. Serine 114 carries the phosphoserine; by FAM20C modification.

This sequence belongs to the EVA1 family. In terms of tissue distribution, expressed in lung, kidney, liver, pancreas, placenta, but not in heart and skeletal muscle.

It is found in the endoplasmic reticulum membrane. Its subcellular location is the lysosome membrane. Its function is as follows. Acts as a regulator of programmed cell death, mediating both autophagy and apoptosis. This chain is Protein eva-1 homolog A (EVA1A), found in Homo sapiens (Human).